A 319-amino-acid chain; its full sequence is Ribosomal large subunit pseudouridine synthase C (319 aa).

One can recognise an S4 RNA-binding domain in the interval 20–83 (QRIDNFLRTQ…AEREEEAVSP (64 aa)). Asp-144 is an active-site residue.

The protein belongs to the pseudouridine synthase RluA family.

The catalysed reaction is uridine(955/2504/2580) in 23S rRNA = pseudouridine(955/2504/2580) in 23S rRNA. Responsible for synthesis of pseudouridine from uracil at positions 955, 2504 and 2580 in 23S ribosomal RNA. This chain is Ribosomal large subunit pseudouridine synthase C, found in Escherichia coli (strain K12).